Consider the following 464-residue polypeptide: tRNA modification GTPase MnmE (464 aa).

Residues Arg25, Glu87, and Lys130 each contribute to the (6S)-5-formyl-5,6,7,8-tetrahydrofolate site. The region spanning Gly226–Gly386 is the TrmE-type G domain. Residue Asn236 coordinates K(+). GTP-binding positions include Asn236–Ser241, Thr255–Thr261, and Asp280–Gly283. Ser240 is a Mg(2+) binding site. Residues Thr255, Ile257, and Thr260 each coordinate K(+). Residue Thr261 participates in Mg(2+) binding. Lys464 lines the (6S)-5-formyl-5,6,7,8-tetrahydrofolate pocket.

Belongs to the TRAFAC class TrmE-Era-EngA-EngB-Septin-like GTPase superfamily. TrmE GTPase family. Homodimer. Heterotetramer of two MnmE and two MnmG subunits. K(+) is required as a cofactor.

It localises to the cytoplasm. Its function is as follows. Exhibits a very high intrinsic GTPase hydrolysis rate. Involved in the addition of a carboxymethylaminomethyl (cmnm) group at the wobble position (U34) of certain tRNAs, forming tRNA-cmnm(5)s(2)U34. This is tRNA modification GTPase MnmE from Burkholderia ambifaria (strain MC40-6).